Consider the following 138-residue polypeptide: 2-amino-3-carboxymuconate-6-semialdehyde decarboxylase (138 aa).

2 residues coordinate Zn(2+): His-6 and His-8. Arg-47 lines the substrate pocket. Positions 70 and 126 each coordinate Zn(2+).

Belongs to the metallo-dependent hydrolases superfamily. ACMSD family. Monomer.

It catalyses the reaction 2-amino-3-carboxymuconate 6-semialdehyde + H(+) = 2-aminomuconate 6-semialdehyde + CO2. The protein operates within secondary metabolite metabolism; quinolate metabolism. Functionally, converts alpha-amino-beta-carboxymuconate-epsilon-semialdehyde (ACMS) to alpha-aminomuconate semialdehyde (AMS). ACMS can be converted non-enzymatically to quinolate (QA), a key precursor of NAD, and a potent endogenous excitotoxin of neuronal cells which is implicated in the pathogenesis of various neurodegenerative disorders. In the presence of ACMSD, ACMS is converted to AMS, a benign catabolite. ACMSD ultimately controls the metabolic fate of tryptophan catabolism along the kynurenine pathway. In Sus scrofa (Pig), this protein is 2-amino-3-carboxymuconate-6-semialdehyde decarboxylase (ACMSD).